Consider the following 192-residue polypeptide: Elongation factor P (192 aa).

A disordered region spans residues 133 to 157 (EVTETTPGVKGDTAQGGDKPATLES).

It belongs to the elongation factor P family.

Its subcellular location is the cytoplasm. The protein operates within protein biosynthesis; polypeptide chain elongation. Its function is as follows. Involved in peptide bond synthesis. Stimulates efficient translation and peptide-bond synthesis on native or reconstituted 70S ribosomes in vitro. Probably functions indirectly by altering the affinity of the ribosome for aminoacyl-tRNA, thus increasing their reactivity as acceptors for peptidyl transferase. This chain is Elongation factor P, found in Salinibacter ruber (strain DSM 13855 / M31).